Consider the following 314-residue polypeptide: Glycerol-3-phosphate dehydrogenase [NAD(P)+] (314 aa).

Phe11, Arg30, and Lys96 together coordinate NADPH. 3 residues coordinate sn-glycerol 3-phosphate: Lys96, Gly124, and Ser126. Ala128 contributes to the NADPH binding site. Sn-glycerol 3-phosphate is bound by residues Lys179, Asp232, Ser242, Arg243, and Asn244. Residue Lys179 is the Proton acceptor of the active site. Arg243 serves as a coordination point for NADPH. NADPH is bound at residue Glu264.

Belongs to the NAD-dependent glycerol-3-phosphate dehydrogenase family.

It is found in the cytoplasm. The enzyme catalyses sn-glycerol 3-phosphate + NAD(+) = dihydroxyacetone phosphate + NADH + H(+). It catalyses the reaction sn-glycerol 3-phosphate + NADP(+) = dihydroxyacetone phosphate + NADPH + H(+). It participates in membrane lipid metabolism; glycerophospholipid metabolism. Its function is as follows. Catalyzes the reduction of the glycolytic intermediate dihydroxyacetone phosphate (DHAP) to sn-glycerol 3-phosphate (G3P), the key precursor for phospholipid synthesis. The sequence is that of Glycerol-3-phosphate dehydrogenase [NAD(P)+] from Paracoccus denitrificans (strain Pd 1222).